Consider the following 490-residue polypeptide: Tektin-3 (490 aa).

Thr7, Thr9, and Thr10 each carry an O-linked (GalNAc...) threonine glycan. N-linked (GlcNAc...) asparagine glycosylation is found at Asn41, Asn86, Asn103, Asn111, Asn276, and Asn344. Residues 424 to 451 (VHEVDDTIQTLQQRLRDAEDTLQSLVHI) adopt a coiled-coil conformation.

Belongs to the tektin family. In terms of assembly, microtubule inner protein component of sperm flagellar doublet microtubules. Interacts with TEKT1, TEKT2, TEKT4 and TEKT5. Interacts with CCDC38. N- and O-glycosylated. In terms of processing, may be proteolytically processed during the epididymal transit of spermatozoa. Post-translationally, ubiquitinated, leading to its degradation. Deubiquitinated by USP16, promoting its stability. In terms of tissue distribution, expressed in spermatozoa. Expressed in airway epithelial cells.

Its subcellular location is the cytoplasm. It is found in the cytoskeleton. It localises to the cilium axoneme. The protein resides in the flagellum axoneme. The protein localises to the cytoplasmic vesicle. Its subcellular location is the secretory vesicle. It is found in the acrosome outer membrane. In terms of biological role, microtubule inner protein (MIP) part of the dynein-decorated doublet microtubules (DMTs) in cilia and flagellar axoneme. Forms filamentous polymers in the walls of ciliary and flagellar microtubules. Required for normal sperm mobility. The sequence is that of Tektin-3 (TEKT3) from Homo sapiens (Human).